The sequence spans 1009 residues: Protein naked cuticle (1009 aa).

Composition is skewed to polar residues over residues 68–83 and 121–130; these read IITT…ASNK and LPQDMSSSGS. Residues 68–166 form a disordered region; the sequence is IITTPPGNAS…QQQTAAAATG (99 aa). Low complexity predominate over residues 152-166; the sequence is QQQQQQQQTAAAATG. Positions 206–282 are interaction with dsh; it reads EFTCDVSVEG…TVSPEGKSKS (77 aa). In terms of domain architecture, EF-hand spans 217-253; it reads KSSQPLQFSFTFYDLDGHHGKITKDDIVGIVYTIYES. Disordered regions lie at residues 328–433, 456–479, and 515–580; these read MSKQ…QQQL, AGNE…RQQD, and GNDS…QQQR. The span at 349–359 shows a compositional bias: basic residues; that stretch reads RRQHRYRPRKL. Positions 370-387 are enriched in basic and acidic residues; that stretch reads NSEKEKERERERERESHA. Residues 403 to 414 show a composition bias toward basic residues; it reads KSHHHHHHHGRY. Residues 515–525 are compositionally biased toward polar residues; sequence GNDSGNWQNRH. Low complexity-rich tracts occupy residues 526–535 and 570–580; these read LQQSLQQQPQ and HQQLQQQQQQR. Residues 584 to 613 are required for nuclear localization and inhibition of Wnt signaling; the sequence is ECWKSALNRNDLISIIRESMEKNRLCFQLN. 4 disordered regions span residues 619-662, 773-799, 835-899, and 955-982; these read NVSP…SPLS, SAAH…HNQK, LQQK…SAGS, and TESG…LDTS. 2 stretches are compositionally biased toward low complexity: residues 624 to 638 and 653 to 662; these read RQPA…QRQR and SPAAPQSPLS. Positions 843 to 857 are enriched in basic residues; that stretch reads RRHRHKQQQQQHHHQ. Low complexity predominate over residues 858–875; the sequence is QQQQQQQQQNQQQQQQQQ. Acidic residues predominate over residues 968–979; it reads EADEGQEQEVEL.

This sequence belongs to the NKD family. As to quaternary structure, interacts with dsh.

Its subcellular location is the cell membrane. It is found in the cytoplasm. The protein localises to the nucleus. Cell autonomous antagonist of the canonical Wnt signaling pathway. May activate a second Wnt signaling pathway that controls planar cell polarity. Required for neuroblast specification. This is Protein naked cuticle from Drosophila pseudoobscura pseudoobscura (Fruit fly).